We begin with the raw amino-acid sequence, 170 residues long: MEDPNPEENMKQQDSPKERSPQSPGGNICHLGAPKCTRCLITFADSKFQERHMKREHPADFVAQKLQGVLFICFTCARSFPSSKALITHQRSHGPAAKPTLPVATTTAQPTFPCPDCGKTFGQAVSLRRHRQMHEVRAPPGTFACTECGQDFAQEAGLHQHYIRHARGEL.

Residues 1-29 (MEDPNPEENMKQQDSPKERSPQSPGGNIC) form a disordered region. The span at 8 to 20 (ENMKQQDSPKERS) shows a compositional bias: basic and acidic residues. 4 consecutive C2H2-type zinc fingers follow at residues 34 to 57 (PKCT…KREH), 71 to 93 (FICF…QRSH), 112 to 134 (FPCP…RQMH), and 143 to 165 (FACT…YIRH).

The protein belongs to the krueppel C2H2-type zinc-finger protein family.

The protein localises to the nucleus. Functionally, may be involved in transcriptional regulation. The protein is Zinc finger protein 576 (ZNF576) of Homo sapiens (Human).